The sequence spans 824 residues: Putative beta-glucuronidase (824 aa).

The helical transmembrane segment at 26–43 (YLKLVLVLYLIMVSWSGY) threads the bilayer. Glu-430 functions as the Proton donor in the catalytic mechanism.

The protein belongs to the glycosyl hydrolase 2 family.

It localises to the membrane. The catalysed reaction is a beta-D-glucuronoside + H2O = D-glucuronate + an alcohol. In terms of biological role, glycoside hydrolase that may be involved in ulvan degradation. Ulvan is the main polysaccharide component of the Ulvales (green seaweed) cell wall. It is composed of disaccharide building blocks comprising 3-sulfated rhamnose (Rha3S) linked to D-glucuronic acid (GlcA), L-iduronic acid (IduA), or D-xylose (Xyl). The protein is Putative beta-glucuronidase of Formosa agariphila (strain DSM 15362 / KCTC 12365 / LMG 23005 / KMM 3901 / M-2Alg 35-1).